A 156-amino-acid polypeptide reads, in one-letter code: Gamma-L-glutamyl-butirosin B gamma-glutamyl cyclotransferase (156 aa).

Position 24–27 (24–27 (YGTL)) interacts with substrate. E89 serves as the catalytic Proton acceptor.

The protein belongs to the gamma-glutamylcyclotransferase family.

The enzyme catalyses gamma-L-glutamyl-butirosin B = butirosin B + 5-oxo-L-proline. The protein operates within antibiotic biosynthesis; butirosin biosynthesis. Cyclotransferase that catalyzes the last step in the biosynthesis of the aminoglycoside antibiotic butirosin B. Cleaves the amide bond via transamidation using the alpha-amine of the terminal gamma-L-glutamate of the side chain, releasing it as the cyclic 5-oxoproline. The sequence is that of Gamma-L-glutamyl-butirosin B gamma-glutamyl cyclotransferase (btrG) from Niallia circulans (Bacillus circulans).